A 562-amino-acid chain; its full sequence is Glutamyl-tRNA(Gln) amidotransferase subunit B, chloroplastic/mitochondrial (562 aa).

A disordered region spans residues 48 to 76 (SVASNSKREPRPVKTRVMTQERGSGETQT). Residues 64-76 (VMTQERGSGETQT) show a composition bias toward polar residues.

The protein belongs to the GatB/GatE family. GatB subfamily. As to quaternary structure, subunit of the heterotrimeric GatCAB amidotransferase (AdT) complex, composed of A, B and C subunits.

The protein localises to the mitochondrion. The protein resides in the plastid. It localises to the chloroplast. It catalyses the reaction L-glutamyl-tRNA(Gln) + L-glutamine + ATP + H2O = L-glutaminyl-tRNA(Gln) + L-glutamate + ADP + phosphate + H(+). Allows the formation of correctly charged Gln-tRNA(Gln) through the transamidation of misacylated Glu-tRNA(Gln) in chloroplasts and mitochondria. The reaction takes place in the presence of glutamine and ATP through an activated gamma-phospho-Glu-tRNA(Gln). The polypeptide is Glutamyl-tRNA(Gln) amidotransferase subunit B, chloroplastic/mitochondrial (Physcomitrium patens (Spreading-leaved earth moss)).